The chain runs to 205 residues: Heme-binding protein 2 (205 aa).

The segment at 1–39 (MAEPLQPDPGAAEDAAAQAVETPGWKAPEDAGPQPGSYE) is disordered. Ala-2 carries the N-acetylalanine modification. Ser-181 carries the phosphoserine modification.

Belongs to the HEBP family. In terms of assembly, monomer. Interacts with LRPPRC. May interact with BCL2L1; an interaction with BCL2L1 was observed using a peptide, but not with the full-length protein. The full-length protein would have to undergo a major conformation change for the interaction to occur. Interacts with PDCD6. Detected in placenta.

The protein resides in the cytoplasm. It localises to the mitochondrion. Can promote mitochondrial permeability transition and facilitate necrotic cell death under different types of stress conditions. This chain is Heme-binding protein 2 (HEBP2), found in Homo sapiens (Human).